The primary structure comprises 264 residues: 2',3'-cyclic-nucleotide 2'-phosphodiesterase (264 aa).

Residues Asp-8, Glu-39, Asn-40, and Asn-67 each coordinate Fe cation. His-68 serves as the catalytic Proton donor. The Fe cation site is built by His-150, His-175, and His-177.

It belongs to the YmdB-like family. Homodimer. The cofactor is Fe(2+). Fe(3+) is required as a cofactor.

It is found in the cytoplasm. The catalysed reaction is a nucleoside 2',3'-cyclic phosphate + H2O = a nucleoside 3'-phosphate + H(+). Plays a central, regulatory role in the late adaptive responses and affects the levels of many genes. May act via regulation of cAMP levels. Decreases the expression of motility genes and induces genes involved in biofilm formation, by controlling the expression of SlrR. Required for formation of intercellular nanotubes that bridge neighboring cells to allow molecular exchange. Plays a key role in directing the early stages of colony development. In vitro, has a metal-dependent phosphodiesterase activity against 2',3'-cAMP and 2',3'-cGMP. Also has 3',5'-cyclic-nucleotide phosphodiesterase activity, but cannot use cyclic di-AMP or cyclic di-GMP, and does not have phosphatase activity. The sequence is that of 2',3'-cyclic-nucleotide 2'-phosphodiesterase (ymdB) from Bacillus subtilis (strain 168).